A 313-amino-acid polypeptide reads, in one-letter code: Mitochondrial uncoupling protein 4 (313 aa).

3 Solcar repeats span residues lysine 4–lysine 115, leucine 124–glycine 215, and aspartate 224–leucine 309. Helical transmembrane passes span phenylalanine 6–isoleucine 26, alanine 84–threonine 104, isoleucine 130–alanine 150, arginine 189–tyrosine 209, valine 230–isoleucine 250, and tyrosine 282–threonine 302.

Belongs to the mitochondrial carrier (TC 2.A.29) family. Expressed in roots, leaves, stems and flowers.

It is found in the mitochondrion inner membrane. Its function is as follows. PUMPS are mitochondrial transporter proteins that create proton leaks across the inner mitochondrial membrane, thus uncoupling oxidative phosphorylation. This leads to a decrease in the efficiency of oxidative phosphorylation and an increase in heat production. May be involved in protecting plant cells against oxidative stress damage. Recombinant PUMP4, reconstituted into liposomes, transports a wide range of dicarboxylic acids including malate, oxaloacetate and succinate as well as phosphate, sulfate and thiosulfate. However, it is unknown if these transports are of any biological significance in vivo. This Arabidopsis thaliana (Mouse-ear cress) protein is Mitochondrial uncoupling protein 4 (PUMP4).